The following is a 309-amino-acid chain: Porphobilinogen deaminase (309 aa).

Cys-242 carries the post-translational modification S-(dipyrrolylmethanemethyl)cysteine.

Belongs to the HMBS family. In terms of assembly, monomer. Dipyrromethane serves as cofactor.

The enzyme catalyses 4 porphobilinogen + H2O = hydroxymethylbilane + 4 NH4(+). It functions in the pathway porphyrin-containing compound metabolism; protoporphyrin-IX biosynthesis; coproporphyrinogen-III from 5-aminolevulinate: step 2/4. Functionally, tetrapolymerization of the monopyrrole PBG into the hydroxymethylbilane pre-uroporphyrinogen in several discrete steps. The chain is Porphobilinogen deaminase from Pseudoalteromonas atlantica (strain T6c / ATCC BAA-1087).